The sequence spans 491 residues: Ketol-acid reductoisomerase (NADP(+)) (491 aa).

In terms of domain architecture, KARI N-terminal Rossmann spans 15–208 (AQLGKCRFMG…GGHRAGVLES (194 aa)). NADP(+) is bound by residues 45-48 (CGAQ), Arg-68, Arg-76, Ser-78, and 108-110 (DKQ). Residue His-132 is part of the active site. An NADP(+)-binding site is contributed by Gly-158. KARI C-terminal knotted domains are found at residues 209–344 (SFVA…TAPQ) and 345–484 (YEGK…MTDM). Asp-217, Glu-221, Glu-389, and Glu-393 together coordinate Mg(2+). Ser-414 provides a ligand contact to substrate.

It belongs to the ketol-acid reductoisomerase family. The cofactor is Mg(2+).

It carries out the reaction (2R)-2,3-dihydroxy-3-methylbutanoate + NADP(+) = (2S)-2-acetolactate + NADPH + H(+). The enzyme catalyses (2R,3R)-2,3-dihydroxy-3-methylpentanoate + NADP(+) = (S)-2-ethyl-2-hydroxy-3-oxobutanoate + NADPH + H(+). Its pathway is amino-acid biosynthesis; L-isoleucine biosynthesis; L-isoleucine from 2-oxobutanoate: step 2/4. It participates in amino-acid biosynthesis; L-valine biosynthesis; L-valine from pyruvate: step 2/4. Its function is as follows. Involved in the biosynthesis of branched-chain amino acids (BCAA). Catalyzes an alkyl-migration followed by a ketol-acid reduction of (S)-2-acetolactate (S2AL) to yield (R)-2,3-dihydroxy-isovalerate. In the isomerase reaction, S2AL is rearranged via a Mg-dependent methyl migration to produce 3-hydroxy-3-methyl-2-ketobutyrate (HMKB). In the reductase reaction, this 2-ketoacid undergoes a metal-dependent reduction by NADPH to yield (R)-2,3-dihydroxy-isovalerate. The chain is Ketol-acid reductoisomerase (NADP(+)) from Escherichia coli O8 (strain IAI1).